The sequence spans 1352 residues: Inhibitor of Bruton tyrosine kinase (1352 aa).

ANK repeat units lie at residues phenylalanine 51 to valine 80 and serine 85 to methionine 114. RCC1 repeat units follow at residues proline 141–glutamine 194, lysine 195–aspartate 246, and glycine 248–arginine 301. In terms of domain architecture, BTB 1 spans histidine 565–threonine 645. Positions alanine 692 to aspartate 716 are disordered. Basic residues predominate over residues serine 701–lysine 710. A BTB 2 domain is found at tyrosine 769 to lysine 837. Residues phenylalanine 976 to valine 1002 form a disordered region. Over residues lysine 977–lysine 989 the composition is skewed to basic residues. The residue at position 991 (serine 991) is a Phosphoserine. The span at serine 993–valine 1002 shows a compositional bias: polar residues. Residues serine 1005, serine 1031, serine 1034, serine 1040, serine 1046, serine 1055, serine 1084, serine 1111, serine 1113, and serine 1116 each carry the phosphoserine modification. The interval glutamate 1032 to isoleucine 1094 is disordered. A compositionally biased stretch (polar residues) spans serine 1084–isoleucine 1094.

In terms of assembly, interacts with the PH domain of BTK.

It localises to the cytoplasm. Its subcellular location is the membrane. Acts as an inhibitor of BTK tyrosine kinase activity, thereby playing a role in B-cell development. Down-regulates BTK kinase activity, leading to interference with BTK-mediated calcium mobilization and NF-kappa-B-driven transcription. In Mus musculus (Mouse), this protein is Inhibitor of Bruton tyrosine kinase (Ibtk).